We begin with the raw amino-acid sequence, 1245 residues long: ATP-dependent helicase/nuclease subunit A (1245 aa).

A UvrD-like helicase ATP-binding domain is found at 4–477; sequence TKWTDEQLSA…IQLYKNFRSR (474 aa). 25 to 32 is an ATP binding site; sequence AAAGSGKT. A UvrD-like helicase C-terminal domain is found at 517–815; it reads KFKDTIVGGP…RIMSIHKSKG (299 aa).

This sequence belongs to the helicase family. AddA subfamily. As to quaternary structure, heterodimer of AddA and AddB/RexB. It depends on Mg(2+) as a cofactor.

The enzyme catalyses Couples ATP hydrolysis with the unwinding of duplex DNA by translocating in the 3'-5' direction.. The catalysed reaction is ATP + H2O = ADP + phosphate + H(+). The heterodimer acts as both an ATP-dependent DNA helicase and an ATP-dependent, dual-direction single-stranded exonuclease. Recognizes the chi site generating a DNA molecule suitable for the initiation of homologous recombination. The AddA nuclease domain is required for chi fragment generation; this subunit has the helicase and 3' -&gt; 5' nuclease activities. The polypeptide is ATP-dependent helicase/nuclease subunit A (Clostridium beijerinckii (strain ATCC 51743 / NCIMB 8052) (Clostridium acetobutylicum)).